The chain runs to 240 residues: Rho GDP-dissociation inhibitor 1 (240 aa).

A disordered region spans residues 1-66; that stretch reads MSLVSGARDM…DDDSKLQLGP (66 aa).

The protein belongs to the Rho GDI family. As to quaternary structure, interacts with RAC-like GTP binding proteins ARAC5/ROP4 and ARAC3/ROP6.

Its subcellular location is the cytoplasm. In terms of biological role, regulates the GDP/GTP exchange reaction of the Rho proteins by inhibiting the dissociation of GDP from them, and the subsequent binding of GTP to them. The protein is Rho GDP-dissociation inhibitor 1 (GDI1) of Arabidopsis thaliana (Mouse-ear cress).